The chain runs to 408 residues: Ribulose bisphosphate carboxylase/oxygenase activase, chloroplastic (408 aa).

A chloroplast-targeting transit peptide spans 1–32 (MQVTMKSSAVSGQRVGGARVATRSVRRAQLQV). Position 138–145 (138–145 (GGKGQGKT)) interacts with ATP.

The protein belongs to the RuBisCO activase family. As to quaternary structure, monomer.

It localises to the plastid. The protein localises to the chloroplast stroma. Activation of RuBisCO (ribulose-1,5-bisphosphate carboxylase/oxygenase; EC 4.1.1.39) involves the ATP-dependent carboxylation of the epsilon-amino group of lysine leading to a carbamate structure. The chain is Ribulose bisphosphate carboxylase/oxygenase activase, chloroplastic from Chlamydomonas reinhardtii (Chlamydomonas smithii).